The chain runs to 675 residues: MTVFPTLGLLFLCQLLATTSAQRVGPQGPPGPRGPPGPSGKDGIDGEPGPSGLPGPPGPKGAPGKPGAAGEAGLPGLPGVDGLTGTDGPPGPNGPPGDRGALGPAGPPGPAGKGLPGPPGPPGPSGLPGGNGFRGPPGPSGLPGFPGPPGPPGPPGLAGIIPEGGGDLQCPALCPPGPPGPPGMPGFKGHTGHKGGPGEIGKEGEKGSPGPPGPPGIPGSVGLQGPRGLRGLPGPMGPAGDRGDIGFRGPPGIPGPPGRAGDQGNKGPQGFRGPKGDTGRPGPKGNPGARGLIGEPGIPGKDGRDGAPGLDGEKGDAARMGVPGEKGPNGLPGLPGRAGIKGSKGEPGSPGEMGEAGPSGEPGIPGDVGIPGDRGLPGPRGATGPVGLPGPIGAPGVRGFQGPKGSSGEPGLPGPTGIRGESGDRGPAGVIGAKGSQGIAGADGLPGDKGELGPFGPPGQKGEPGKRGELGPKGAQGPNGTAGAPGIPGHPGPMGHQGEQGVPGITGKPGPPGKEASEQHIRELCGEMINDQIAQLAANLRKPLSPGMTGRPGPAGPPGPPGATGSVGHPGARGPPGYRGPTGELGDPGPRGDTGEKGDKGPAGQGIDGPDGDQGPQGLPGVPGISKNGRDGAQGEPGLPGDPGTPGAVGAQGTPGICDTSACMGAVGASTSKKS.

Residues 1–21 form the signal peptide; it reads MTVFPTLGLLFLCQLLATTSA. Disordered regions lie at residues 22–517 and 542–660; these read QRVG…KEAS and KPLS…ICDT. Residues 25–515 form a triple-helical region 3 (COL3) region; it reads GPQGPPGPRG…TGKPGPPGKE (491 aa). 2 stretches are compositionally biased toward pro residues: residues 27–38 and 51–60; these read QGPPGPRGPPGP and SGLPGPPGPK. The span at 62-87 shows a compositional bias: low complexity; sequence APGKPGAAGEAGLPGLPGVDGLTGTD. A compositionally biased stretch (pro residues) spans 105–125; that stretch reads AGPPGPAGKGLPGPPGPPGPS. A compositionally biased stretch (gly residues) spans 126–135; sequence GLPGGNGFRG. Composition is skewed to pro residues over residues 136–155 and 173–184; these read PPGPSGLPGFPGPPGPPGPP and LCPPGPPGPPGM. Residues 218 to 233 are compositionally biased toward low complexity; the sequence is PGSVGLQGPRGLRGLP. Positions 242 to 244 match the Cell attachment site motif; that stretch reads RGD. The segment covering 301-317 has biased composition (basic and acidic residues); it reads KDGRDGAPGLDGEKGDA. The segment covering 361 to 374 has biased composition (low complexity); that stretch reads EPGIPGDVGIPGDR. Residue N479 is glycosylated (N-linked (GlcNAc...) asparagine). Over residues 481-508 the composition is skewed to low complexity; the sequence is TAGAPGIPGHPGPMGHQGEQGVPGITGK. Residues 516 to 546 form a nonhelical region 3 (NC3) region; sequence ASEQHIRELCGEMINDQIAQLAANLRKPLSP. A triple-helical region 2 (COL2) region spans residues 547–626; sequence GMTGRPGPAG…QGLPGVPGIS (80 aa). A compositionally biased stretch (low complexity) spans 569–582; the sequence is HPGARGPPGYRGPT. A Cell attachment site motif is present at residues 591 to 593; sequence RGD. Over residues 613-624 the composition is skewed to low complexity; that stretch reads DQGPQGLPGVPG. Positions 627-631 are nonhelical region 2 (NC2); sequence KNGRD. The segment at 632–658 is triple-helical region 1 (COL1); it reads GAQGEPGLPGDPGTPGAVGAQGTPGIC. The segment at 659–675 is nonhelical region 1 (NC1); that stretch reads DTSACMGAVGASTSKKS.

Belongs to the fibril-associated collagens with interrupted helices (FACIT) family. Trimers composed of three different chains: alpha 1(IX), alpha 2(IX), and alpha 3(IX). Prolines at the third position of the tripeptide repeating unit (G-X-Y) are hydroxylated in some or all of the chains.

It localises to the secreted. The protein localises to the extracellular space. The protein resides in the extracellular matrix. In terms of biological role, collagen type IX is a minor cartilage non-fibrillar collagen. It is associated with type II collagen fibrils. In Gallus gallus (Chicken), this protein is Collagen alpha-3(IX) chain (COL9A3).